The sequence spans 126 residues: Interleukin-18-binding protein (126 aa).

Positions 1 to 16 are cleaved as a signal peptide; that stretch reads MRILFLIAFMYGCVHS.

This sequence belongs to the orthopoxvirus OPG022 family.

It is found in the secreted. Soluble IL18-binding protein that may modulate the host antiviral response. This Cynomys gunnisoni (Gunnison's prairie dog) protein is Interleukin-18-binding protein (OPG022).